The primary structure comprises 520 residues: Transactivator/viroplasmin protein (520 aa).

The interval 487-520 (QDASADSGPKDGPPPTRSIVEKEDVPTTSSKQVD) is disordered.

Belongs to the caulimoviridae viroplasmin family.

It localises to the host cytoplasm. In terms of biological role, enhances the ribosomal termination-reinitiation event leading to the translation of major open reading frames on the polycistronic viral RNAs. In Cauliflower mosaic virus (strain CM-1841) (CaMV), this protein is Transactivator/viroplasmin protein.